The following is a 152-amino-acid chain: Stigma-specific STIG1-like protein 1 (152 aa).

An N-terminal signal peptide occupies residues 1–19; it reads MAFVKLLVSIAITTAITIA.

The protein belongs to the STIG1 family.

This chain is Stigma-specific STIG1-like protein 1, found in Arabidopsis thaliana (Mouse-ear cress).